A 438-amino-acid polypeptide reads, in one-letter code: sn-glycerol-3-phosphate-binding periplasmic protein UgpB (438 aa).

The first 23 residues, 1 to 23 (MKPLHYTASALALGLALMGNAQA), serve as a signal peptide directing secretion. Sn-glycerol 3-phosphate contacts are provided by Y65, E89, S144, S270, G307, Y346, and R397.

The protein belongs to the bacterial solute-binding protein 1 family. As to quaternary structure, the complex is composed of two ATP-binding proteins (UgpC), two transmembrane proteins (UgpA and UgpE) and a solute-binding protein (UgpB).

The protein resides in the periplasm. Functionally, part of the ABC transporter complex UgpBAEC involved in sn-glycerol-3-phosphate (G3P) import. Binds G3P. The protein is sn-glycerol-3-phosphate-binding periplasmic protein UgpB (ugpB) of Shigella flexneri.